The following is a 672-amino-acid chain: DNA ligase (672 aa).

NAD(+) contacts are provided by residues 34–38 (DSVYD), 83–84 (SL), and Glu-113. Lys-115 functions as the N6-AMP-lysine intermediate in the catalytic mechanism. Residues Arg-136, Glu-170, Lys-286, and Lys-310 each coordinate NAD(+). Zn(2+) contacts are provided by Cys-404, Cys-407, Cys-422, and Cys-427. In terms of domain architecture, BRCT spans 592-672 (STDSSFNGLR…EFIQQMEEES (81 aa)).

It belongs to the NAD-dependent DNA ligase family. LigA subfamily. The cofactor is Mg(2+). Mn(2+) serves as cofactor.

It catalyses the reaction NAD(+) + (deoxyribonucleotide)n-3'-hydroxyl + 5'-phospho-(deoxyribonucleotide)m = (deoxyribonucleotide)n+m + AMP + beta-nicotinamide D-nucleotide.. Functionally, DNA ligase that catalyzes the formation of phosphodiester linkages between 5'-phosphoryl and 3'-hydroxyl groups in double-stranded DNA using NAD as a coenzyme and as the energy source for the reaction. It is essential for DNA replication and repair of damaged DNA. This Ligilactobacillus salivarius (strain UCC118) (Lactobacillus salivarius) protein is DNA ligase.